The sequence spans 307 residues: Myeloid-associated differentiation marker-like protein 2 (307 aa).

MARVEL domains follow at residues 17 to 154 (AVTS…ARPG) and 159 to 303 (YMAT…RIRF). 7 helical membrane passes run 53 to 73 (FCVA…ACEF), 90 to 110 (AFAM…PLYF), 129 to 149 (LAAS…VALT), 163 to 183 (VSGL…GALV), 198 to 218 (VAVY…SVLG), 232 to 252 (VVYT…WPVF), and 278 to 298 (LVVA…LAYS).

Belongs to the MAL family.

It is found in the membrane. The polypeptide is Myeloid-associated differentiation marker-like protein 2 (MYADML2) (Bos taurus (Bovine)).